The following is a 359-amino-acid chain: NADH-quinone oxidoreductase subunit H (359 aa).

8 consecutive transmembrane segments (helical) span residues Ile16–Leu36, Gly94–Ile114, Leu129–Ala149, Val167–Leu187, Phe208–Leu228, Phe261–Leu281, Ile296–Val316, and Leu331–Met351.

It belongs to the complex I subunit 1 family. In terms of assembly, NDH-1 is composed of 14 different subunits. Subunits NuoA, H, J, K, L, M, N constitute the membrane sector of the complex.

The protein localises to the cell inner membrane. It carries out the reaction a quinone + NADH + 5 H(+)(in) = a quinol + NAD(+) + 4 H(+)(out). Functionally, NDH-1 shuttles electrons from NADH, via FMN and iron-sulfur (Fe-S) centers, to quinones in the respiratory chain. The immediate electron acceptor for the enzyme in this species is believed to be ubiquinone. Couples the redox reaction to proton translocation (for every two electrons transferred, four hydrogen ions are translocated across the cytoplasmic membrane), and thus conserves the redox energy in a proton gradient. This subunit may bind ubiquinone. This Polaromonas sp. (strain JS666 / ATCC BAA-500) protein is NADH-quinone oxidoreductase subunit H.